The sequence spans 489 residues: Adenosylhomocysteinase (489 aa).

Positions 68, 151, and 213 each coordinate substrate. 214–216 provides a ligand contact to NAD(+); the sequence is TTT. Substrate is bound by residues K243 and D247. NAD(+)-binding positions include N248, 277–282, E300, N335, 356–358, and N403; these read GYGDVG and IGH.

Belongs to the adenosylhomocysteinase family. It depends on NAD(+) as a cofactor.

The protein localises to the cytoplasm. The enzyme catalyses S-adenosyl-L-homocysteine + H2O = L-homocysteine + adenosine. Its pathway is amino-acid biosynthesis; L-homocysteine biosynthesis; L-homocysteine from S-adenosyl-L-homocysteine: step 1/1. Its function is as follows. May play a key role in the regulation of the intracellular concentration of adenosylhomocysteine. The polypeptide is Adenosylhomocysteinase (Mycobacterium sp. (strain KMS)).